A 354-amino-acid polypeptide reads, in one-letter code: Uroporphyrinogen decarboxylase (354 aa).

Residues 27 to 31 (RQAGR), D77, Y154, T209, and H327 each bind substrate.

Belongs to the uroporphyrinogen decarboxylase family. As to quaternary structure, homodimer.

It is found in the cytoplasm. The catalysed reaction is uroporphyrinogen III + 4 H(+) = coproporphyrinogen III + 4 CO2. Its pathway is porphyrin-containing compound metabolism; protoporphyrin-IX biosynthesis; coproporphyrinogen-III from 5-aminolevulinate: step 4/4. In terms of biological role, catalyzes the decarboxylation of four acetate groups of uroporphyrinogen-III to yield coproporphyrinogen-III. The chain is Uroporphyrinogen decarboxylase from Escherichia coli O7:K1 (strain IAI39 / ExPEC).